The chain runs to 304 residues: Uricase (304 aa).

Position 2 is an N-acetylalanine (Ala2). N6-acetyllysine; alternate is present on residues Lys10 and Lys23. N6-succinyllysine; alternate occurs at positions 10 and 23. The active-site Charge relay system is Lys23. Residues Lys27 and Lys36 each carry the N6-acetyllysine modification. Residues Ser39 and Ser63 each carry the phosphoserine modification. Catalysis depends on Thr68, which acts as the Charge relay system. The urate site is built by Thr68 and Asp69. Residues Lys118, Lys122, and Lys164 each carry the N6-acetyllysine modification. Residue Phe170 coordinates urate. 2 positions are modified to N6-acetyllysine: Lys175 and Lys185. Residue Arg187 participates in urate binding. N6-acetyllysine; alternate occurs at positions 221 and 228. N6-succinyllysine; alternate occurs at positions 221 and 228. A Phosphoserine modification is found at Ser232. Residues Val235, Gln236, and Asn262 each coordinate urate. His264 serves as the catalytic Charge relay system. Lys278 bears the N6-acetyllysine mark. Phosphotyrosine is present on Tyr289. The short motif at 302 to 304 (SRL) is the Microbody targeting signal element.

Belongs to the uricase family.

It is found in the peroxisome. It carries out the reaction urate + O2 + H2O = 5-hydroxyisourate + H2O2. It participates in purine metabolism; urate degradation; (S)-allantoin from urate: step 1/3. Functionally, catalyzes the oxidation of uric acid to 5-hydroxyisourate, which is further processed to form (S)-allantoin. The sequence is that of Uricase (UOX) from Macaca mulatta (Rhesus macaque).